The sequence spans 436 residues: Glutamyl-tRNA reductase (436 aa).

Substrate contacts are provided by residues 50–53 (TCNR), Ser110, 115–117 (ETQ), and Gln121. Cys51 functions as the Nucleophile in the catalytic mechanism. An NADP(+)-binding site is contributed by 190 to 195 (GLGEMS).

Belongs to the glutamyl-tRNA reductase family. Homodimer.

The enzyme catalyses (S)-4-amino-5-oxopentanoate + tRNA(Glu) + NADP(+) = L-glutamyl-tRNA(Glu) + NADPH + H(+). It functions in the pathway porphyrin-containing compound metabolism; protoporphyrin-IX biosynthesis; 5-aminolevulinate from L-glutamyl-tRNA(Glu): step 1/2. In terms of biological role, catalyzes the NADPH-dependent reduction of glutamyl-tRNA(Glu) to glutamate 1-semialdehyde (GSA). This chain is Glutamyl-tRNA reductase, found in Wolinella succinogenes (strain ATCC 29543 / DSM 1740 / CCUG 13145 / JCM 31913 / LMG 7466 / NCTC 11488 / FDC 602W) (Vibrio succinogenes).